Consider the following 364-residue polypeptide: Nuclear hormone receptor family member nhr-53 (364 aa).

The segment at residues P20 to Q95 is a DNA-binding region (nuclear receptor). 2 NR C4-type zinc fingers span residues C23–C43 and C59–C83. Residues R110–T363 enclose the NR LBD domain.

The protein belongs to the nuclear hormone receptor family.

It localises to the nucleus. Orphan nuclear receptor. This is Nuclear hormone receptor family member nhr-53 (nhr-53) from Caenorhabditis elegans.